A 260-amino-acid chain; its full sequence is Acetylglutamate kinase (260 aa).

Residues 45–46 (GG), arginine 67, and asparagine 159 contribute to the substrate site.

Belongs to the acetylglutamate kinase family. ArgB subfamily.

It is found in the cytoplasm. The enzyme catalyses N-acetyl-L-glutamate + ATP = N-acetyl-L-glutamyl 5-phosphate + ADP. Its pathway is amino-acid biosynthesis; L-arginine biosynthesis; N(2)-acetyl-L-ornithine from L-glutamate: step 2/4. In terms of biological role, catalyzes the ATP-dependent phosphorylation of N-acetyl-L-glutamate. The sequence is that of Acetylglutamate kinase from Colwellia psychrerythraea (strain 34H / ATCC BAA-681) (Vibrio psychroerythus).